A 163-amino-acid chain; its full sequence is E1B protein, small T-antigen (163 aa).

It belongs to the adenoviridae E1B 19 kDa protein family.

It is found in the host cell membrane. It localises to the host nucleus envelope. The protein resides in the host nucleus lamina. Functionally, putative adenovirus Bcl-2 homolog that inhibits apoptosis induced by TNF or FAS pathways, as well as p53-mediated apoptosis. Without E1B 19K function, virus production is compromised because of premature death of host cell. Interacts with Bax protein in cell lysates. This Human adenovirus A serotype 12 (HAdV-12) protein is E1B protein, small T-antigen.